The following is a 204-amino-acid chain: Large ribosomal subunit protein uL22m (204 aa).

The transit peptide at Met1–Glu38 directs the protein to the mitochondrion.

Belongs to the universal ribosomal protein uL22 family. In terms of assembly, component of the mitochondrial ribosome large subunit (39S) which comprises a 16S rRNA and about 50 distinct proteins.

The protein localises to the mitochondrion. This is Large ribosomal subunit protein uL22m (MRPL22) from Bos taurus (Bovine).